We begin with the raw amino-acid sequence, 501 residues long: Putative lon protease homolog (501 aa).

An ATP-binding site is contributed by 53–60 (GPPGIGKS). Polar residues predominate over residues 481-494 (SSSQRMSQHGYSSE). Positions 481 to 501 (SSSQRMSQHGYSSENIDRSYM) are disordered.

Belongs to the peptidase S16 family.

The sequence is that of Putative lon protease homolog from Methanothermobacter thermautotrophicus (strain ATCC 29096 / DSM 1053 / JCM 10044 / NBRC 100330 / Delta H) (Methanobacterium thermoautotrophicum).